Consider the following 225-residue polypeptide: UPF0758 protein BCQ_4241 (225 aa).

One can recognise an MPN domain in the interval 103–225 (SIRSPEDCAR…FVSLKEKGHI (123 aa)). Zn(2+) contacts are provided by H174, H176, and D187. Residues 174–187 (HNHPSGDPAPSRED) carry the JAMM motif motif.

Belongs to the UPF0758 family.

The sequence is that of UPF0758 protein BCQ_4241 from Bacillus cereus (strain Q1).